The sequence spans 571 residues: Proline--tRNA ligase (571 aa).

It belongs to the class-II aminoacyl-tRNA synthetase family. ProS type 1 subfamily. As to quaternary structure, homodimer.

The protein localises to the cytoplasm. It carries out the reaction tRNA(Pro) + L-proline + ATP = L-prolyl-tRNA(Pro) + AMP + diphosphate. Its function is as follows. Catalyzes the attachment of proline to tRNA(Pro) in a two-step reaction: proline is first activated by ATP to form Pro-AMP and then transferred to the acceptor end of tRNA(Pro). As ProRS can inadvertently accommodate and process non-cognate amino acids such as alanine and cysteine, to avoid such errors it has two additional distinct editing activities against alanine. One activity is designated as 'pretransfer' editing and involves the tRNA(Pro)-independent hydrolysis of activated Ala-AMP. The other activity is designated 'posttransfer' editing and involves deacylation of mischarged Ala-tRNA(Pro). The misacylated Cys-tRNA(Pro) is not edited by ProRS. This Pseudomonas fluorescens (strain ATCC BAA-477 / NRRL B-23932 / Pf-5) protein is Proline--tRNA ligase.